The chain runs to 525 residues: Pre-mRNA-processing factor 19 homolog 2 (525 aa).

One can recognise a U-box domain in the interval methionine 1–proline 70. 7 WD repeats span residues threonine 220–threonine 261, glycine 262–cysteine 301, aspartate 307–glutamine 346, serine 351–lysine 390, glycine 393–serine 431, leucine 433–asparagine 469, and serine 478–valine 517. The DWD box motif lies at phenylalanine 409 to arginine 424.

The protein belongs to the WD repeat PRP19 family. In terms of assembly, homotetramer. Component of the multiprotein assembly MOS4-associated complex (MAC) at least composed of MOS4, CDC5, PRL1 and PRP19 which is related to the PRP19C/Prp19 complex/NTC/Nineteen complex identified in other organisms. Associated with the spliceosome.

Its subcellular location is the nucleus. The catalysed reaction is S-ubiquitinyl-[E2 ubiquitin-conjugating enzyme]-L-cysteine + [acceptor protein]-L-lysine = [E2 ubiquitin-conjugating enzyme]-L-cysteine + N(6)-ubiquitinyl-[acceptor protein]-L-lysine.. The protein operates within protein modification; protein ubiquitination. Its function is as follows. Probable ubiquitin-protein ligase which is mainly involved pre-mRNA splicing and DNA repair. Component of the MAC complex that probably regulates defense responses through transcriptional control and thereby is essential for plant innate immunity. This is Pre-mRNA-processing factor 19 homolog 2 (PRP19B) from Arabidopsis thaliana (Mouse-ear cress).